Consider the following 308-residue polypeptide: MTDVTTLPDRRLLLVHAHPDDEAIGTGATMAHYAATGGHVTLVTCTLGEEGEVHVPELAQLAAAGADQLGGYRIGELAAACRSLGVTDHRFLGGAGRYRDSGMMGLATNEHPRAFWRADLDEAAAHLVELMREVRPQVMVTYDDNGFYGHPDHIQAHRVAMRAYELAAVEGFAPAKVYWTAMPQSVLEAGMVHFAGSSDNPFAGIEEAVELPFCTPDDRIAARIDATGQHAAKEAAMRAHATQIPDNSWLYSIAANFGSEFMGVEYYTLAVGAKGPGAGPYGWEDDLFAGLPVAAGPDRTRAGVTGPW.

Zn(2+)-binding residues include H18, D21, and H153.

Belongs to the MshB deacetylase family. The cofactor is Zn(2+).

It catalyses the reaction 1D-myo-inositol 2-acetamido-2-deoxy-alpha-D-glucopyranoside + H2O = 1D-myo-inositol 2-amino-2-deoxy-alpha-D-glucopyranoside + acetate. Its function is as follows. Catalyzes the deacetylation of 1D-myo-inositol 2-acetamido-2-deoxy-alpha-D-glucopyranoside (GlcNAc-Ins) in the mycothiol biosynthesis pathway. The sequence is that of 1D-myo-inositol 2-acetamido-2-deoxy-alpha-D-glucopyranoside deacetylase from Salinispora arenicola (strain CNS-205).